We begin with the raw amino-acid sequence, 784 residues long: Kinesin-like protein Klp68D (784 aa).

The Kinesin motor domain maps to 19–344; that stretch reads CVQVVVRCRP…LRYASRAKSI (326 aa). 106–113 lines the ATP pocket; sequence GQTGTGKT. A coiled-coil region spans residues 351–385; sequence NEDPQDAKLKEYQEEIERLKRLIGPQQQQRSEKQV. Disordered stretches follow at residues 371 to 449, 605 to 652, and 742 to 784; these read RLIG…ERER, KFSS…PSSL, and IKSS…LVNK. Basic residues predominate over residues 386–396; the sequence is TAKKQRVKKPK. Acidic residues predominate over residues 416 to 428; sequence PVEDDSDPEGAES. A coiled-coil region spans residues 426-582; it reads AESESDKENE…KRQLLIIDNF (157 aa). Over residues 429 to 449 the composition is skewed to basic and acidic residues; sequence ESDKENEAEVAKSNEELERER. Over residues 622–634 the composition is skewed to basic residues; the sequence is SSKRPVSHPQRRR. The segment covering 769-778 has biased composition (low complexity); that stretch reads KKPASAYPKA.

Belongs to the TRAFAC class myosin-kinesin ATPase superfamily. Kinesin family. Kinesin II subfamily. Expressed primarily in the central nervous system and in a subset of the peripheral nervous system during embryogenesis.

The protein resides in the cytoplasm. It localises to the cytoskeleton. In terms of biological role, plus-end directed microtubule motor that may be used for anterograde axonal transport and could conceivably move cargos in fly neurons different than those moved by kinesin heavy chain or other plus-end directed motors. The polypeptide is Kinesin-like protein Klp68D (Klp68D) (Drosophila melanogaster (Fruit fly)).